A 2259-amino-acid polypeptide reads, in one-letter code: Golgin subfamily A member 4 (2259 aa).

A disordered region spans residues 1–54; sequence MFKKLKQKISEEQQQLQQALAPAQASSSSSTPTRTRSRTSSFTDQLDDATPNRE. The residue at position 10 (Ser10) is a Phosphoserine. Over residues 12–41 the composition is skewed to low complexity; it reads EQQQLQQALAPAQASSSSSTPTRTRSRTSS. Thr39 carries the phosphothreonine modification. Ser41, Ser104, and Ser111 each carry phosphoserine. The interaction with MACF1 stretch occupies residues 165-235; that stretch reads SLSREQLLQR…EELQMDQQAK (71 aa). The stretch at 167–2182 forms a coiled coil; it reads SREQLLQRLR…SYEKSVCAAA (2016 aa). Composition is skewed to basic and acidic residues over residues 1932-1946 and 1954-1977; these read LEDRPEENSKSHVIE and DGRHSDLESKLAGSEREKQKLSKE. Residues 1932 to 1977 are disordered; sequence LEDRPEENSKSHVIESKLGTPMDGRHSDLESKLAGSEREKQKLSKE. The 48-residue stretch at 2199–2246 folds into the GRIP domain; that stretch reads LFGEPTEFEYLRKVLFEYMMGRETKTMAKVITTVLRFPDDQAQKILER.

Homodimer. Interacts with GTP-bound ARL1 and ARL3. Interacts with MACF1. Directly interacts with TBC1D23. Interacts with FAM91A1; this interaction may be mediated by TBC1D23. Expressed in the head of epididymal sperm but not in testicular sperm (at protein level).

The protein resides in the cytoplasm. It localises to the golgi apparatus membrane. Its subcellular location is the golgi apparatus. It is found in the trans-Golgi network membrane. Involved in vesicular trafficking at the Golgi apparatus level. May play a role in delivery of transport vesicles containing GPI-linked proteins from the trans-Golgi network through its interaction with MACF1. Involved in endosome-to-Golgi trafficking. This is Golgin subfamily A member 4 from Rattus norvegicus (Rat).